A 366-amino-acid polypeptide reads, in one-letter code: Polyprenyl transferase AOL_s00215g276 (366 aa).

Positions 1–22 (MESIIARPRTRSSAKEKTQTMS) are disordered. The next 7 membrane-spanning stretches (helical) occupy residues 53 to 73 (LHTL…CLSA), 85 to 105 (FLSV…AFCT), 137 to 157 (IIAF…TLGF), 160 to 180 (ALVC…KRVV), 185 to 205 (LVLG…VAGN), 212 to 232 (AVPM…IYAT), and 253 to 273 (HMHQ…SFTA). Residue N277 is glycosylated (N-linked (GlcNAc...) asparagine). The next 2 membrane-spanning stretches (helical) occupy residues 281-301 (LFWS…LLSL) and 312-332 (VFLM…IELW). N352 is a glycosylation site (N-linked (GlcNAc...) asparagine).

Belongs to the UbiA prenyltransferase family. Mg(2+) is required as a cofactor.

The protein resides in the membrane. It participates in secondary metabolite biosynthesis; terpenoid biosynthesis. Functionally, polyprenyl transferase; part of the gene cluster that mediates the biosynthesis of sesquiterpenyl epoxy-cyclohexenoids (SECs) such as anthrobotrisins and arthrosporols, metabolites that possess a novel hybrid carbon skeleton consisting of a polyketide-derived epoxycyclohexenol combined with a terpenoid-derived monocyclic sesquiterpenol substructure (PKS-PTS hybrid). The SEC pathway plays an important role for fungal soil colonization via decreasing fungal nematode-capturing ability. Within the pathway, the polyprenyl transferase catalyzes the farnesylation of toluquinol to yield farnesyl hydroquinone, the first hybrid precursor for biosynthesis of SECs, and farnesyl quinone (34) might be the key precursor for the epoxy ring formation. The pathway begins with the biosynthesis of 6-methylsalicylic acid (6-MSA), the first precursor of the polyketide-derived epoxycyclohexenol in arthrosporols, by the polyketide synthase (PKS) AOL_s00215g283 via condensation of 1 acetate and 3 malonate units. The 6-methylsalicylic acid decarboxylase AOL_s00215g281 then catalyzes the decarboxylation of 6-methylsalicylic acid to yield m-cresol. The cytochrome P450 monooxygenase AOL_s00215g282 further oxidizes m-cresol to yield toluquinol. With the assistance of the oxidoreductase AOL_s00215g277, the polyprenyl transferase AOL_s00215g276 catalyzes the farnesylation of toluquinol to produce farnesyl hydroquinone, the hybrid precursor for biosynthesis of SECs. Farnesyl hydroquinone undergoes epoxidation and then subsequent dehydrogenation to form farnesyl epoxy-quinone, the first and simplest SEC. The cytochrome P450 monooxygenase AOL_s00215g278 and the FAD-dependent monooxygenase AOL_s00215g279 might be involved in the oxygenation of the phenol moiety, most likely in the epoxy formation. The cytochrome P450 monooxygenases AOL_s00215g274 and AOL_s00215g280 are involved in specific regional ketone reductions at respectively C-4 and C-1 of farnesyl epoxy-quinone PubMed:33823587. The sequence is that of Polyprenyl transferase AOL_s00215g276 from Arthrobotrys oligospora (strain ATCC 24927 / CBS 115.81 / DSM 1491) (Nematode-trapping fungus).